Consider the following 311-residue polypeptide: Ribonuclease HIII (311 aa).

The RNase H type-2 domain maps to leucine 93–histidine 310. 3 residues coordinate a divalent metal cation: aspartate 99, glutamate 100, and aspartate 204.

Belongs to the RNase HII family. RnhC subfamily. Requires Mn(2+) as cofactor. It depends on Mg(2+) as a cofactor.

The protein resides in the cytoplasm. It catalyses the reaction Endonucleolytic cleavage to 5'-phosphomonoester.. Functionally, endonuclease that specifically degrades the RNA of RNA-DNA hybrids. In Geobacillus kaustophilus (strain HTA426), this protein is Ribonuclease HIII.